Reading from the N-terminus, the 595-residue chain is Tripeptidyl-peptidase SED3 (595 aa).

Residues 1-22 form the signal peptide; sequence MLLPWQQTIIILFLGVNSLVAA. A propeptide spans 23–201 (removed in mature form); the sequence is LRNTYRTVEE…KLETIQLSSN (179 aa). N-linked (GlcNAc...) asparagine glycans are attached at residues Asn-207, Asn-264, and Asn-278. Residues 209 to 595 enclose the Peptidase S53 domain; sequence TITPQCLRDI…EILAKIVRDL (387 aa). Catalysis depends on charge relay system residues Glu-285 and Asp-289. Residues Asn-298 and Asn-365 are each glycosylated (N-linked (GlcNAc...) asparagine). Ser-499 (charge relay system) is an active-site residue. Residues Asp-541 and Ile-542 each contribute to the Ca(2+) site. N-linked (GlcNAc...) asparagine glycosylation is found at Asn-554, Asn-557, and Asn-569. Positions 573 and 575 each coordinate Ca(2+).

Ca(2+) serves as cofactor.

It is found in the secreted. Its subcellular location is the extracellular space. The catalysed reaction is Release of an N-terminal tripeptide from a polypeptide.. Its function is as follows. Secreted tripeptidyl-peptidase which degrades proteins at acidic pHs and is involved in virulence. This is Tripeptidyl-peptidase SED3 (SED3) from Arthroderma otae (strain ATCC MYA-4605 / CBS 113480) (Microsporum canis).